Consider the following 612-residue polypeptide: BTB/POZ domain-containing protein 9 (612 aa).

Positions 36–104 (GDVTFVVEKK…IYTGRATLTD (69 aa)) constitute a BTB domain. Positions 142 to 240 (VCMTFDVASL…SLTELLNVVR (99 aa)) constitute a BACK domain. Positions 559 to 612 (QQSNQKEDSSEEPGTGDPSTPNQQLDPHAPRAPSASSLPPSPGPNSRSPNQQNQ) are disordered. Positions 589-612 (RAPSASSLPPSPGPNSRSPNQQNQ) are enriched in low complexity.

Expressed in the brain (at protein level).

The sequence is that of BTB/POZ domain-containing protein 9 (Btbd9) from Mus musculus (Mouse).